We begin with the raw amino-acid sequence, 72 residues long: Movement protein TGBp3 (72 aa).

Topologically, residues 1–2 (MS) are lumenal. A helical transmembrane segment spans residues 3–23 (LSFSLIVFAVGVAVSIGVLTL). The Cytoplasmic portion of the chain corresponds to 24 to 72 (TTQQSSSYCLILVDGAKAVVEGCHLRQDIPAILSELKPASSPFNPLFCS).

The protein belongs to the Tymovirales TGBp3 protein family.

It is found in the host endoplasmic reticulum membrane. In terms of biological role, plays a role in viral cell-to-cell propagation, by facilitating genome transport to neighboring plant cells through plasmosdesmata. May induce the formation of granular vesicles derived from the Endoplasmic reticulum, which align on actin filaments. This is Movement protein TGBp3 (ORF4) from Lolium latent virus (isolate Lolium/USA/US1/-) (LoLV).